The chain runs to 239 residues: NAD-dependent protein deacylase (239 aa).

Residues 1-239 (MNVLILTGAG…PKLLNHFSAM (239 aa)) form the Deacetylase sirtuin-type domain. 8–27 (GAGISAESGIPTFRDANGLW) is a binding site for NAD(+). Substrate-binding residues include Y52 and R55. 93-96 (QNID) serves as a coordination point for NAD(+). H111 serves as the catalytic Proton acceptor. Residues 182 to 184 (GTS), 207 to 209 (NLD), and A225 contribute to the NAD(+) site.

Belongs to the sirtuin family. Class III subfamily.

It localises to the cytoplasm. It carries out the reaction N(6)-acetyl-L-lysyl-[protein] + NAD(+) + H2O = 2''-O-acetyl-ADP-D-ribose + nicotinamide + L-lysyl-[protein]. It catalyses the reaction N(6)-succinyl-L-lysyl-[protein] + NAD(+) + H2O = 2''-O-succinyl-ADP-D-ribose + nicotinamide + L-lysyl-[protein]. NAD-dependent lysine deacetylase and desuccinylase that specifically removes acetyl and succinyl groups on target proteins. Modulates the activities of several proteins which are inactive in their acylated form. This chain is NAD-dependent protein deacylase, found in Rhodopirellula baltica (strain DSM 10527 / NCIMB 13988 / SH1).